The sequence spans 218 residues: Fucoxanthin-chlorophyll a-c binding protein, chloroplastic (218 aa).

The N-terminal 36 residues, methionine 1–methionine 36, are a transit peptide targeting the chloroplast.

The protein belongs to the fucoxanthin chlorophyll protein family. The LHC complex of chromophytic algae is composed of fucoxanthin, chlorophyll A and C bound non-covalently by fucoxanthin chlorophyll proteins (FCPs). The ratio of pigments in this LHC is; fucoxanthin: chlorophyll C: chlorophyll A; (0.6-1): (0.1-0.3): (1).

The protein localises to the plastid. It localises to the chloroplast thylakoid membrane. Functionally, the light-harvesting complex (LHC) functions as a light receptor, it captures and delivers excitation energy to photosystems with which it is closely associated. Energy is transferred from the carotenoid and chlorophyll C (or B) to chlorophyll A and the photosynthetic reaction centers where it is used to synthesize ATP and reducing power. This chain is Fucoxanthin-chlorophyll a-c binding protein, chloroplastic, found in Chattonella marina var. antiqua (Red tide flagellate).